A 551-amino-acid polypeptide reads, in one-letter code: Chaperonin GroEL (551 aa).

ATP is bound by residues 30-33 (TLGP), K51, 87-91 (DGTTT), G415, and D496.

This sequence belongs to the chaperonin (HSP60) family. As to quaternary structure, forms a cylinder of 14 subunits composed of two heptameric rings stacked back-to-back. Interacts with the co-chaperonin GroES.

The protein resides in the cytoplasm. The enzyme catalyses ATP + H2O + a folded polypeptide = ADP + phosphate + an unfolded polypeptide.. Functionally, together with its co-chaperonin GroES, plays an essential role in assisting protein folding. The GroEL-GroES system forms a nano-cage that allows encapsulation of the non-native substrate proteins and provides a physical environment optimized to promote and accelerate protein folding. The sequence is that of Chaperonin GroEL from Maricaulis maris (strain MCS10) (Caulobacter maris).